A 31-amino-acid polypeptide reads, in one-letter code: Cytochrome b6-f complex subunit 6 (31 aa).

A helical transmembrane segment spans residues 4–26 (ITSYFGFLLAASTITPALLIGLS).

It belongs to the PetL family. As to quaternary structure, the 4 large subunits of the cytochrome b6-f complex are cytochrome b6, subunit IV (17 kDa polypeptide, PetD), cytochrome f and the Rieske protein, while the 4 small subunits are PetG, PetL, PetM and PetN. The complex functions as a dimer.

It localises to the plastid. It is found in the chloroplast thylakoid membrane. In terms of biological role, component of the cytochrome b6-f complex, which mediates electron transfer between photosystem II (PSII) and photosystem I (PSI), cyclic electron flow around PSI, and state transitions. PetL is important for photoautotrophic growth as well as for electron transfer efficiency and stability of the cytochrome b6-f complex. The protein is Cytochrome b6-f complex subunit 6 of Liriodendron tulipifera (Tuliptree).